An 81-amino-acid polypeptide reads, in one-letter code: Carboxysome shell vertex protein CsoS4B (81 aa).

The region spanning 1 to 77 (MEVMRVRSDL…TDLTIGGIID (77 aa)) is the BMV domain.

It belongs to the CcmL/EutN family. CsoS4 subfamily. Homopentamer.

The protein localises to the carboxysome. Functionally, probably forms vertices in the carboxysome. Has been modeled to induce curvature upon insertion into an otherwise flat hexagonal layer of major carboxysome subunits. A minor shell protein, only 12 pentamers of CsoS4A/CsoS4B are calculated to be present in each carboxysome. The 2 CsoS4 proteins contribute to the impermeability of the carboxysome to CO(2). Its central pore is probably too small to allow passage of metabolites; its function might be to anchor different proteins or metabolites to the carboxysome. In terms of biological role, unlike beta-carboxysomes, alpha-carboxysomes (Cb) can form without cargo protein. CsoS2 is essential for Cb formation and is also capable of targeting foreign proteins to the Cb. The Cb shell assembles with the aid of CsoS2; CsoS1A, CsoS1B and CsoS1C form the majority of the shell while CsoS4A and CsoS4B form vertices. CsoS1D forms pseudohexamers that probably control metabolite flux into and out of the shell. The protein is Carboxysome shell vertex protein CsoS4B of Halothiobacillus neapolitanus (strain ATCC 23641 / c2) (Thiobacillus neapolitanus).